Consider the following 127-residue polypeptide: Egg cell-secreted protein 1.4 (127 aa).

An N-terminal signal peptide occupies residues 1–25; sequence MASNTTFLFSTVTLLIILLNTTVSG.

The protein belongs to the plant egg cell-secreted peptide family. In terms of tissue distribution, restricted to female reproductive tissues, specifically accumulating in storage vesicles of the unfertilized egg cell.

The protein localises to the cytoplasmic vesicle. Its subcellular location is the secreted. Its function is as follows. Involved in the regulation of gamete interactions during the double fertilization and to prevent multiple-pollen tube attraction; mediates the redistribution of the gamete fusogen HAP2/GCS1 to the cell surface after secretion upon sperm arrival. This is Egg cell-secreted protein 1.4 (EC1.4) from Arabidopsis thaliana (Mouse-ear cress).